Consider the following 94-residue polypeptide: Co-chaperonin GroES (94 aa).

The protein belongs to the GroES chaperonin family. As to quaternary structure, heptamer of 7 subunits arranged in a ring. Interacts with the chaperonin GroEL.

It localises to the cytoplasm. Its function is as follows. Together with the chaperonin GroEL, plays an essential role in assisting protein folding. The GroEL-GroES system forms a nano-cage that allows encapsulation of the non-native substrate proteins and provides a physical environment optimized to promote and accelerate protein folding. GroES binds to the apical surface of the GroEL ring, thereby capping the opening of the GroEL channel. This is Co-chaperonin GroES from Shouchella clausii (strain KSM-K16) (Alkalihalobacillus clausii).